The following is a 216-amino-acid chain: Large ribosomal subunit protein uL1z (216 aa).

It belongs to the universal ribosomal protein uL1 family. As to quaternary structure, interacts with the GTPase NUG2.

The chain is Large ribosomal subunit protein uL1z (RPL10AA) from Arabidopsis thaliana (Mouse-ear cress).